The following is a 472-amino-acid chain: Zinc finger imprinted 3 (472 aa).

A KRAB domain is found at 8–80 (VTFEDVTVNF…EEEVLGSGRA (73 aa)). C2H2-type zinc fingers lie at residues 167-189 (LKCNACRKLFSSKSRLQSHLRRH), 195-217 (FECHSCGRAFGEKWKLDKHQKTH), 223-245 (YKCENCGNAYKQKSNLFQHQKMH), 251-273 (YQCKTCGKAFSWKSSCINHEKIH), 279-301 (YQCNECEKSFRQNSTLIQHKKVH), 307-329 (FQCTDCGKAFIYKSDLVKHQRIH), 335-357 (YKCSICEKAFSQKSNVIDHEKIH), 363-385 (YECDLCGNTFIQKKNLIQHKKIH), 391-413 (YECNRCGKAFFQKSNLHSHQKTH), 419-441 (YRCSECGKTFIRKLNLSLHKKTH), and 447-470 (YGCSECGKAFADRSYLVRHQKRIH).

This sequence belongs to the krueppel C2H2-type zinc-finger protein family.

It localises to the nucleus. Functionally, may be involved in transcriptional regulation. The sequence is that of Zinc finger imprinted 3 (ZIM3) from Homo sapiens (Human).